A 247-amino-acid chain; its full sequence is Ribonuclease 3 (247 aa).

The region spanning 21-149 (FKKLSKKIGI…LVGAIYLDRG (129 aa)) is the RNase III domain. Mg(2+) is bound at residue Glu62. Asp66 is an active-site residue. Asn135 and Glu138 together coordinate Mg(2+). The active site involves Glu138. The DRBM domain maps to 176–245 (DYKTQLQEYS…AKELYIRIRR (70 aa)).

Belongs to the ribonuclease III family. Homodimer. The cofactor is Mg(2+).

The protein resides in the cytoplasm. It catalyses the reaction Endonucleolytic cleavage to 5'-phosphomonoester.. In terms of biological role, digests double-stranded RNA. Involved in the processing of primary rRNA transcript to yield the immediate precursors to the large and small rRNAs (23S and 16S). Processes some mRNAs, and tRNAs when they are encoded in the rRNA operon. Processes pre-crRNA and tracrRNA of type II CRISPR loci if present in the organism. This chain is Ribonuclease 3, found in Leptospira borgpetersenii serovar Hardjo-bovis (strain L550).